Reading from the N-terminus, the 624-residue chain is Prickle planar cell polarity protein 3 (624 aa).

The span at 1–12 (MFARGSRRRRSG) shows a compositional bias: basic residues. The interval 1 to 26 (MFARGSRRRRSGRAPPEAEDPARGQP) is disordered. The 109-residue stretch at 74-182 (SDFQRHSISD…TVRIFPVTIT (109 aa)) folds into the PET domain. LIM zinc-binding domains follow at residues 184-249 (AICE…CLRP), 250-309 (RCQA…RHAE), and 310-373 (YCDG…SETT). Positions 371–617 (ETTAPGPGRR…SHPVMPRQTR (247 aa)) are disordered. The segment covering 383 to 409 (SAGTVTTPLTTSTASFSATEGTSETAS) has biased composition (low complexity). Residues 447-458 (PEPPTESPGHPA) are compositionally biased toward pro residues. Residues Ser-475 and Ser-491 each carry the phosphoserine modification. A compositionally biased stretch (basic residues) spans 509 to 541 (SCHHHHHHRRRRQRHRRRGSHHHHHHPGRHGHH). The segment covering 545-564 (LGSGSDSGSCSSSPSSPSSE) has biased composition (low complexity). Polar residues predominate over residues 587–601 (RTTQDTSTETFNSPA).

This sequence belongs to the prickle / espinas / testin family. As to quaternary structure, interacts with VANGL2 via its C-terminus. The VANGL2-dependent membrane recruitment of PRICKLE3 is a prerequisite for its polarization. Interacts with WTIP. WTIP is involved in the recruitment of PRICKLE3 to the basal body. Interacts with MT-ATP8, a component of the mitochondrial complex V. As to expression, widely expressed.

It localises to the cytoplasm. The protein resides in the cell membrane. Its subcellular location is the mitochondrion. Its function is as follows. Involved in the planar cell polarity (PCP) pathway that is essential for the polarization of epithelial cells during morphogenetic processes, including gastrulation and neurulation. PCP is maintained by two molecular modules, the global and the core modules, PRICKLE3 being part of the core module. Distinct complexes of the core module segregate to opposite sides of the cell, where they interact with the opposite complex in the neighboring cell at or near the adherents junctions. Involved in the organization of the basal body. Involved in cilia growth and positioning. Required for proper assembly, stability, and function of mitochondrial membrane ATP synthase (mitochondrial complex V). This is Prickle planar cell polarity protein 3 from Mus musculus (Mouse).